Reading from the N-terminus, the 1392-residue chain is ATP-dependent helicase/nuclease subunit A (1392 aa).

The UvrD-like helicase ATP-binding domain maps to 3 to 489; that stretch reads NPKWTPAQQA…IDLNQNFRSR (487 aa). Residue 24-31 participates in ATP binding; the sequence is AAAGSGKT. Disordered stretches follow at residues 291–319, 556–594, and 1051–1126; these read RGSK…KARD, RGAE…LEEA, and GPVQ…LDTK. Basic and acidic residues-rich tracts occupy residues 305-319 and 569-583; these read ENSK…KARD and AKGE…REPE. In terms of domain architecture, UvrD-like helicase C-terminal spans 556–886; it reads RGAEDAATGA…RFITVHSSKG (331 aa). The span at 584–594 shows a compositional bias: acidic residues; sequence SGDDESSLEEA. The segment covering 1088-1113 has biased composition (basic and acidic residues); that stretch reads ASGKTEIPGETKNSEETKTSEDKKNL.

It belongs to the helicase family. AddA subfamily. In terms of assembly, heterodimer of AddA and AddB/RexB. Requires Mg(2+) as cofactor.

It catalyses the reaction Couples ATP hydrolysis with the unwinding of duplex DNA by translocating in the 3'-5' direction.. The enzyme catalyses ATP + H2O = ADP + phosphate + H(+). In terms of biological role, the heterodimer acts as both an ATP-dependent DNA helicase and an ATP-dependent, dual-direction single-stranded exonuclease. Recognizes the chi site generating a DNA molecule suitable for the initiation of homologous recombination. The AddA nuclease domain is required for chi fragment generation; this subunit has the helicase and 3' -&gt; 5' nuclease activities. The polypeptide is ATP-dependent helicase/nuclease subunit A (Desulfitobacterium hafniense (strain Y51)).